Reading from the N-terminus, the 336-residue chain is NADH-quinone oxidoreductase subunit H (336 aa).

8 helical membrane passes run 4-24 (YILWTSLYVLLIVIPLILVVA), 75-95 (YLFFIAPILAFAPAYAAWAVI), 108-128 (LGLLYILAMTSFSIYGIVIAG), 154-174 (MGFAIVGVVIAAGSMGITGII), 181-201 (IWHWYFIPLFPLFIVYFIAGI), 233-253 (LFFLAEYANMILISILTSIMF), 272-292 (FVPGVVWLFAKTGIFMFMFLW), and 308-328 (LGWKIFIPLTFVWVVIVACMV).

This sequence belongs to the complex I subunit 1 family. As to quaternary structure, NDH-1 is composed of 14 different subunits. Subunits NuoA, H, J, K, L, M, N constitute the membrane sector of the complex.

It is found in the cell inner membrane. It carries out the reaction a quinone + NADH + 5 H(+)(in) = a quinol + NAD(+) + 4 H(+)(out). NDH-1 shuttles electrons from NADH, via FMN and iron-sulfur (Fe-S) centers, to quinones in the respiratory chain. The immediate electron acceptor for the enzyme in this species is believed to be ubiquinone. Couples the redox reaction to proton translocation (for every two electrons transferred, four hydrogen ions are translocated across the cytoplasmic membrane), and thus conserves the redox energy in a proton gradient. This subunit may bind ubiquinone. The polypeptide is NADH-quinone oxidoreductase subunit H (Francisella tularensis subsp. tularensis (strain FSC 198)).